The chain runs to 437 residues: MHIAVVGLSHRTAPVEVREKLSIPEQTMEESLQNLRNHEQVLEASILSTCNRLEIYTLVRNPDLGIAAVRDFLSGHSGLESRDLSPHLFTYHHDEAIAHLMRVTAGLDSLVLGEGQILSQVKKMMRLGQEHKSIGPILNRLLTQAVSTGKRVRSETNLSTGAVSVSSAAVELAQLKLGQSRGQDALVTLETEQIAVVGAGRMSRLLLQHLQAKGASGVVLLNRTIERASALATDFPNLPIQCRGLDDLDQCLSTCSLVFTSTAVDDPIIDANRLNALNRRSSLRLIDIGVPRNIASDVHEVSGVESHDVDDLQEVVERNQEARQQVAREAEGLLLEEGRLFLEWWDSLEAVPTINRLRASLEEIRVEELTKALSRMGPDFSARERKVVEALTKGMINKILHTPVTQLRSPQQRSERQQALQVVEKIFDLESGAATQD.

Substrate-binding positions include 49–52, S109, 114–116, and Q120; these read TCNR and EGQ. C50 (nucleophile) is an active-site residue. 198 to 203 lines the NADP(+) pocket; it reads GAGRMS.

The protein belongs to the glutamyl-tRNA reductase family. Homodimer.

The enzyme catalyses (S)-4-amino-5-oxopentanoate + tRNA(Glu) + NADP(+) = L-glutamyl-tRNA(Glu) + NADPH + H(+). It participates in porphyrin-containing compound metabolism; protoporphyrin-IX biosynthesis; 5-aminolevulinate from L-glutamyl-tRNA(Glu): step 1/2. The protein operates within porphyrin-containing compound metabolism; chlorophyll biosynthesis. Its function is as follows. Catalyzes the NADPH-dependent reduction of glutamyl-tRNA(Glu) to glutamate 1-semialdehyde (GSA). The chain is Glutamyl-tRNA reductase from Synechococcus sp. (strain CC9311).